Reading from the N-terminus, the 129-residue chain is Phosphoribosyl-AMP cyclohydrolase (129 aa).

Mg(2+) is bound at residue Asp76. Cys77 provides a ligand contact to Zn(2+). The Mg(2+) site is built by Asp78 and Asp80. Zn(2+) is bound by residues Cys97 and Cys104.

The protein belongs to the PRA-CH family. As to quaternary structure, homodimer. Mg(2+) is required as a cofactor. It depends on Zn(2+) as a cofactor.

It is found in the cytoplasm. The enzyme catalyses 1-(5-phospho-beta-D-ribosyl)-5'-AMP + H2O = 1-(5-phospho-beta-D-ribosyl)-5-[(5-phospho-beta-D-ribosylamino)methylideneamino]imidazole-4-carboxamide. It functions in the pathway amino-acid biosynthesis; L-histidine biosynthesis; L-histidine from 5-phospho-alpha-D-ribose 1-diphosphate: step 3/9. Its function is as follows. Catalyzes the hydrolysis of the adenine ring of phosphoribosyl-AMP. The sequence is that of Phosphoribosyl-AMP cyclohydrolase from Leptothrix cholodnii (strain ATCC 51168 / LMG 8142 / SP-6) (Leptothrix discophora (strain SP-6)).